A 216-amino-acid chain; its full sequence is ATP-dependent Clp protease proteolytic subunit 1 (216 aa).

Serine 119 functions as the Nucleophile in the catalytic mechanism. Histidine 144 is a catalytic residue.

It belongs to the peptidase S14 family. As to quaternary structure, fourteen ClpP subunits assemble into 2 heptameric rings which stack back to back to give a disk-like structure with a central cavity, resembling the structure of eukaryotic proteasomes.

The protein localises to the cytoplasm. The enzyme catalyses Hydrolysis of proteins to small peptides in the presence of ATP and magnesium. alpha-casein is the usual test substrate. In the absence of ATP, only oligopeptides shorter than five residues are hydrolyzed (such as succinyl-Leu-Tyr-|-NHMec, and Leu-Tyr-Leu-|-Tyr-Trp, in which cleavage of the -Tyr-|-Leu- and -Tyr-|-Trp bonds also occurs).. Its function is as follows. Cleaves peptides in various proteins in a process that requires ATP hydrolysis. Has a chymotrypsin-like activity. Plays a major role in the degradation of misfolded proteins. The chain is ATP-dependent Clp protease proteolytic subunit 1 from Cutibacterium acnes (strain DSM 16379 / KPA171202) (Propionibacterium acnes).